Here is a 147-residue protein sequence, read N- to C-terminus: Protein phosphatase 1 regulatory subunit 14B (147 aa).

The span at 1 to 15 (MADSGPAGGAALAAP) shows a compositional bias: low complexity. The disordered stretch occupies residues 1–55 (MADSGPAGGAALAAPAPGPGSGGAGPRVYFQSPPGAAGEGPGGADDEGPVRRQGK). N-acetylalanine is present on alanine 2. Serine 21 is subject to Phosphoserine. A Phosphotyrosine modification is found at tyrosine 29. Serine 32 bears the Phosphoserine mark. Threonine 57 carries the phosphothreonine modification. Positions 61–103 (DRKELRKRLNLEEWILEQLTRLYDCQEEEIPELEIDVDELLDM) form a coiled coil.

It belongs to the PP1 inhibitor family. Phosphorylated primarily on Thr-57 by PKC (in vitro). An unknown Ser is also phosphorylated by PKC (in vitro).

The protein resides in the cytoplasm. Its function is as follows. Inhibitor of PPP1CA. Has over 50-fold higher inhibitory activity when phosphorylated. This is Protein phosphatase 1 regulatory subunit 14B (PPP1R14B) from Sus scrofa (Pig).